Reading from the N-terminus, the 224-residue chain is Ribosome maturation factor RimM (224 aa).

The span at 1-12 (MARRPGSSSRGP) shows a compositional bias: low complexity. 2 disordered regions span residues 1–46 (MARR…PSLV) and 204–224 (VADP…DDPG). The region spanning 137 to 211 (EDEFFLTDLI…KVVADPPEDL (75 aa)) is the PRC barrel domain.

Belongs to the RimM family. As to quaternary structure, binds ribosomal protein uS19.

It is found in the cytoplasm. In terms of biological role, an accessory protein needed during the final step in the assembly of 30S ribosomal subunit, possibly for assembly of the head region. Essential for efficient processing of 16S rRNA. May be needed both before and after RbfA during the maturation of 16S rRNA. It has affinity for free ribosomal 30S subunits but not for 70S ribosomes. This chain is Ribosome maturation factor RimM, found in Methylorubrum populi (strain ATCC BAA-705 / NCIMB 13946 / BJ001) (Methylobacterium populi).